The sequence spans 382 residues: MAP kinase-activated protein kinase 3 (382 aa).

Position 1 is an N-acetylmethionine (M1). The interval M1–P34 is disordered. The span at G20 to G29 shows a compositional bias: gly residues. The Protein kinase domain occupies Q44–I304. ATP contacts are provided by residues L50–V58 and K73. D166 functions as the Proton acceptor in the catalytic mechanism. T201 is modified (phosphothreonine; by MAPK14). S251 carries the post-translational modification Phosphoserine; by MAPK14. S307 bears the Phosphoserine; by autocatalysis mark. The tract at residues S307 to R343 is autoinhibitory helix. At T313 the chain carries Phosphothreonine; by MAPK14. The Nuclear export signal (NES) motif lies at M335–V344. Residues D345 to Q369 form a p38 MAPK-binding site region. Short sequence motifs (bipartite nuclear localization signal) lie at residues K350–D353 and K364–K368. The segment at S357–Q382 is disordered. Polar residues predominate over residues A370–Q382.

The protein belongs to the protein kinase superfamily. CAMK Ser/Thr protein kinase family. As to quaternary structure, heterodimer with p38-alpha/MAPK14. The heterodimer with p38-alpha/MAPK14 forms a stable complex: molecules are positioned 'face to face' so that the ATP-binding sites of both kinases are at the heterodimer interface. Interacts with TCF3 and with polycomb proteins, such as PCH2 and BMI1/PCGF4. In terms of processing, phosphorylated and activated by MAPK1/ERK2 and MAPK3/ERK1. Phosphorylated and activated by MAP kinase p38-alpha/MAPK14 at Thr-201, Ser-251 and Thr-313. Widely expressed, with a higher expression level observed in heart and skeletal muscle. No expression in brain. Expressed in the retinal pigment epithelium.

The protein resides in the nucleus. It is found in the cytoplasm. It carries out the reaction L-seryl-[protein] + ATP = O-phospho-L-seryl-[protein] + ADP + H(+). The catalysed reaction is L-threonyl-[protein] + ATP = O-phospho-L-threonyl-[protein] + ADP + H(+). Its activity is regulated as follows. Activated following phosphorylation by p38-alpha/MAPK14 following various stresses. Inhibited by ligand 5B (2'-[2-(1,3-benzodioxol-5-yl)pyrimidin-4-yl]-5',6'-dihydrospiro[piperidine-4,7'-pyrrolo[3,2-c]pyridin]- 4'(1'h)-one) and ligand P4O (2-[2-(2-fluorophenyl)pyridin-4-yl]-1,5,6,7-tetrahydro- 4h-pyrrolo[3,2-c]pyridin-4-one), 2 ATP-competitive inhibitors. Its function is as follows. Stress-activated serine/threonine-protein kinase involved in cytokines production, endocytosis, cell migration, chromatin remodeling and transcriptional regulation. Following stress, it is phosphorylated and activated by MAP kinase p38-alpha/MAPK14, leading to phosphorylation of substrates. Phosphorylates serine in the peptide sequence, Hyd-X-R-X(2)-S, where Hyd is a large hydrophobic residue. MAPKAPK2 and MAPKAPK3, share the same function and substrate specificity, but MAPKAPK3 kinase activity and level in protein expression are lower compared to MAPKAPK2. Phosphorylates HSP27/HSPB1, KRT18, KRT20, RCSD1, RPS6KA3, TAB3 and TTP/ZFP36. Mediates phosphorylation of HSP27/HSPB1 in response to stress, leading to dissociate HSP27/HSPB1 from large small heat-shock protein (sHsps) oligomers and impair their chaperone activities and ability to protect against oxidative stress effectively. Involved in inflammatory response by regulating tumor necrosis factor (TNF) and IL6 production post-transcriptionally: acts by phosphorylating AU-rich elements (AREs)-binding proteins, such as TTP/ZFP36, leading to regulate the stability and translation of TNF and IL6 mRNAs. Phosphorylation of TTP/ZFP36, a major post-transcriptional regulator of TNF, promotes its binding to 14-3-3 proteins and reduces its ARE mRNA affinity leading to inhibition of dependent degradation of ARE-containing transcript. Involved in toll-like receptor signaling pathway (TLR) in dendritic cells: required for acute TLR-induced macropinocytosis by phosphorylating and activating RPS6KA3. Also acts as a modulator of Polycomb-mediated repression. In Homo sapiens (Human), this protein is MAP kinase-activated protein kinase 3 (MAPKAPK3).